Consider the following 177-residue polypeptide: Ribosome maturation factor RimM (177 aa).

One can recognise a PRC barrel domain in the interval 98–177 (GEEFYWRELY…RIEVDWDPGF (80 aa)).

This sequence belongs to the RimM family. Binds ribosomal protein uS19.

It localises to the cytoplasm. In terms of biological role, an accessory protein needed during the final step in the assembly of 30S ribosomal subunit, possibly for assembly of the head region. Essential for efficient processing of 16S rRNA. May be needed both before and after RbfA during the maturation of 16S rRNA. It has affinity for free ribosomal 30S subunits but not for 70S ribosomes. This is Ribosome maturation factor RimM from Photobacterium profundum (strain SS9).